Reading from the N-terminus, the 315-residue chain is tRNA dimethylallyltransferase (315 aa).

Residue 13 to 20 (GPTASGKT) coordinates ATP. 15-20 (TASGKT) provides a ligand contact to substrate. Interaction with substrate tRNA stretches follow at residues 38-41 (DSAL), 162-166 (QRLSR), 243-248 (RCVGYR), and 276-283 (KRQITWLR).

The protein belongs to the IPP transferase family. Monomer. The cofactor is Mg(2+).

It catalyses the reaction adenosine(37) in tRNA + dimethylallyl diphosphate = N(6)-dimethylallyladenosine(37) in tRNA + diphosphate. Catalyzes the transfer of a dimethylallyl group onto the adenine at position 37 in tRNAs that read codons beginning with uridine, leading to the formation of N6-(dimethylallyl)adenosine (i(6)A). This Vibrio vulnificus (strain CMCP6) protein is tRNA dimethylallyltransferase.